The sequence spans 631 residues: Chaperone protein HtpG (631 aa).

The a; substrate-binding stretch occupies residues 1–342; that stretch reads MSEQTANKET…SNDLPLNVSR (342 aa). A b region spans residues 343-559; the sequence is EILQDNKVTQ…DFEMGTQMAK (217 aa). The interval 560–631 is c; that stretch reads LLEAAGQAAP…LSAMNQLLAK (72 aa).

The protein belongs to the heat shock protein 90 family. In terms of assembly, homodimer.

The protein localises to the cytoplasm. Functionally, molecular chaperone. Has ATPase activity. This is Chaperone protein HtpG from Aliivibrio fischeri (strain ATCC 700601 / ES114) (Vibrio fischeri).